The primary structure comprises 418 residues: ATP-dependent RNA helicase RhlB (418 aa).

The Q motif signature appears at 9-37 (TKFADLPLEKSLISGLTSQGYEYCTPIQA). The region spanning 40–219 (LPITLTGKDI…FEHMNDPESI (180 aa)) is the Helicase ATP-binding domain. Residue 53–60 (AQTGTGKT) participates in ATP binding. The DEAD box signature appears at 165 to 168 (DEAD). Residues 243-390 (KILLLLSLIE…CSEYDKNAML (148 aa)) form the Helicase C-terminal domain.

This sequence belongs to the DEAD box helicase family. RhlB subfamily. As to quaternary structure, component of the RNA degradosome, which is a multiprotein complex involved in RNA processing and mRNA degradation.

Its subcellular location is the cytoplasm. It catalyses the reaction ATP + H2O = ADP + phosphate + H(+). In terms of biological role, DEAD-box RNA helicase involved in RNA degradation. Has RNA-dependent ATPase activity and unwinds double-stranded RNA. The chain is ATP-dependent RNA helicase RhlB from Psychromonas ingrahamii (strain DSM 17664 / CCUG 51855 / 37).